The sequence spans 397 residues: Pyridinium-3,5-bisthiocarboxylic acid mononucleotide nickel insertion protein (397 aa).

The protein belongs to the LarC family.

It catalyses the reaction Ni(II)-pyridinium-3,5-bisthiocarboxylate mononucleotide = pyridinium-3,5-bisthiocarboxylate mononucleotide + Ni(2+). Involved in the biosynthesis of a nickel-pincer cofactor ((SCS)Ni(II) pincer complex). Binds Ni(2+), and functions in nickel delivery to pyridinium-3,5-bisthiocarboxylic acid mononucleotide (P2TMN), to form the mature cofactor. Is thus probably required for the activation of nickel-pincer cofactor-dependent enzymes. The sequence is that of Pyridinium-3,5-bisthiocarboxylic acid mononucleotide nickel insertion protein from Thermotoga petrophila (strain ATCC BAA-488 / DSM 13995 / JCM 10881 / RKU-1).